We begin with the raw amino-acid sequence, 509 residues long: Zinc finger protein CKR1 (509 aa).

A KRAB domain is found at 1–61 (MEPYVLLDPR…GSEEPQTHPP (61 aa)). Basic and acidic residues-rich tracts occupy residues 41 to 50 (EDAVGLKEDA) and 98 to 112 (PKRD…RDRP). A disordered region spans residues 41 to 114 (EDAVGLKEDA…PSRVRDRPFG (74 aa)). 11 consecutive C2H2-type zinc fingers follow at residues 113–135 (FGCP…RRVH), 141–163 (YSCP…RRTH), 169–191 (HKCQ…SRGH), 197–219 (HRCG…RRVH), 225–247 (YECP…RRSH), 279–303 (QRCA…ERSH), 303–325 (HRCG…RRVH), 331–353 (FPCG…GKTH), 359–383 (YKCG…GHAA), 387–409 (FTCG…RRVH), and 415–437 (YECP…RRSH). The tract at residues 428–479 (SHLTKHRRSHGPKAPLLPVQGRGEAGEPLRASPLSSGAEQRDGRRAQRGGVE) is disordered.

This sequence belongs to the krueppel C2H2-type zinc-finger protein family.

It is found in the nucleus. The sequence is that of Zinc finger protein CKR1 from Gallus gallus (Chicken).